The chain runs to 140 residues: Oocyte-expressed protein homolog (140 aa).

The 62-residue stretch at proline 40–leucine 101 folds into the KH; atypical domain.

It belongs to the KHDC1 family. In terms of assembly, component of the subcortical maternal complex (SCMC), at least composed of NLRP5, KHDC3, OOEP, and TLE6. Within the complex, interacts with NLRP5, KHDC3 and TLE6. As part of the SCMC interacts with the SCMC-associated protein NLRP4F. The SCMC may facilitate translocation of its components between the nuclear and cytoplasmic compartments. Forms a scaffold complex with KHDC3/FILIA, and interacts with BLM and TRIM25 at DNA replication forks.

The protein resides in the cytoplasm. Its subcellular location is the nucleus. Functionally, component of the subcortical maternal complex (SCMC), a multiprotein complex that plays a key role in early embryonic development. The SCMC complex is a structural constituent of cytoplasmic lattices, which consist in fibrous structures found in the cytoplasm of oocytes and preimplantation embryos. They are required to store maternal proteins critical for embryonic development, such as proteins that control epigenetic reprogramming of the preimplantation embryo, and prevent their degradation or activation. As part of the OOEP-KHDC3 scaffold, recruits BLM and TRIM25 to DNA replication forks, thereby promoting the ubiquitination of BLM by TRIM25, enhancing BLM retainment at replication forks and therefore promoting stalled replication fork restart. Positively regulates the homologous recombination-mediated DNA double-strand break (DSB) repair pathway by regulating ATM activation and RAD51 recruitment to DSBs in oocytes. Thereby contributes to oocyte survival and the resumption and completion of meiosis. The sequence is that of Oocyte-expressed protein homolog (OOEP) from Bos taurus (Bovine).